An 822-amino-acid polypeptide reads, in one-letter code: DNA gyrase subunit A (822 aa).

Positions 32–497 (LPDVRDGLKP…QVLSLEDEDL (466 aa)) constitute a Topo IIA-type catalytic domain. Y120 (O-(5'-phospho-DNA)-tyrosine intermediate) is an active-site residue. The GyrA-box signature appears at 524 to 530 (QKRGGRG).

Belongs to the type II topoisomerase GyrA/ParC subunit family. As to quaternary structure, heterotetramer, composed of two GyrA and two GyrB chains. In the heterotetramer, GyrA contains the active site tyrosine that forms a transient covalent intermediate with DNA, while GyrB binds cofactors and catalyzes ATP hydrolysis.

The protein localises to the cytoplasm. The catalysed reaction is ATP-dependent breakage, passage and rejoining of double-stranded DNA.. A type II topoisomerase that negatively supercoils closed circular double-stranded (ds) DNA in an ATP-dependent manner to modulate DNA topology and maintain chromosomes in an underwound state. Negative supercoiling favors strand separation, and DNA replication, transcription, recombination and repair, all of which involve strand separation. Also able to catalyze the interconversion of other topological isomers of dsDNA rings, including catenanes and knotted rings. Type II topoisomerases break and join 2 DNA strands simultaneously in an ATP-dependent manner. This Streptococcus pneumoniae serotype 4 (strain ATCC BAA-334 / TIGR4) protein is DNA gyrase subunit A.